Reading from the N-terminus, the 362-residue chain is 3-dehydroquinate synthase (362 aa).

NAD(+) is bound by residues 71 to 76 (DGEQYK), 105 to 109 (GVVGD), 129 to 130 (TT), Lys-142, Lys-151, and 169 to 172 (CLKT). Positions 184, 247, and 264 each coordinate Zn(2+).

The protein belongs to the sugar phosphate cyclases superfamily. Dehydroquinate synthase family. It depends on Co(2+) as a cofactor. The cofactor is Zn(2+). NAD(+) serves as cofactor.

The protein localises to the cytoplasm. It carries out the reaction 7-phospho-2-dehydro-3-deoxy-D-arabino-heptonate = 3-dehydroquinate + phosphate. It participates in metabolic intermediate biosynthesis; chorismate biosynthesis; chorismate from D-erythrose 4-phosphate and phosphoenolpyruvate: step 2/7. Functionally, catalyzes the conversion of 3-deoxy-D-arabino-heptulosonate 7-phosphate (DAHP) to dehydroquinate (DHQ). The chain is 3-dehydroquinate synthase from Escherichia coli O6:K15:H31 (strain 536 / UPEC).